Reading from the N-terminus, the 915-residue chain is Phototropin-2 (915 aa).

Pro residues predominate over residues 1-10 (MERPRAPPSP). 2 disordered regions span residues 1–62 (MERP…EFQD) and 84–118 (DDGI…GAFP). Residues Ser9 and Ser22 each carry the phosphoserine modification. Polar residues predominate over residues 27–43 (NPSSGKETHGSTSSSSK). Basic and acidic residues predominate over residues 93–107 (SEVERSKNMSRRSSE). The 74-residue stretch at 120-193 (VSQELKTALS…AKIRDCVKNG (74 aa)) folds into the PAS 1 domain. Phosphoserine is present on Ser121. Residue Asn169 participates in FMN binding. The residue at position 170 (Cys170) is an S-4a-FMN cysteine. Residues Arg171, Gln174, Arg187, Asn202, Asn212, Gln233, and Lys238 each coordinate FMN. In terms of domain architecture, PAC 1 spans 194-248 (KSYCGRLLNYKKDGTPFWNLLTVTPIKDDQGNTIKFIGMQVEVSKYTEGVNDKAL). Residues 281 to 344 (HRKSQVQESV…KSSNNRHEDL (64 aa)) are disordered. 2 stretches are compositionally biased toward polar residues: residues 286 to 310 (VQES…GRQT) and 325 to 337 (RVST…LKSS). Ser364 carries the phosphoserine modification. One can recognise a PAS 2 domain in the interval 376 to 449 (QGIDLATTLE…QKIRDAIRDQ (74 aa)). Asn425 contacts FMN. Cys426 is modified (S-4a-FMN cysteine). FMN is bound by residues Arg427, Gln430, Arg443, Asn458, Asn468, Phe470, and Gln489. The PAC 2 domain maps to 450 to 504 (REITVQLINYTKSGKKFWNLFHLQPMRDQKGELQYFIGVQLDGSDHVEPLQNRLS). Residues 577-864 (FKPIKPLGSG…ANEIKQHAFF (288 aa)) enclose the Protein kinase domain. Residues 583 to 591 (LGSGDTGSV) and Lys606 each bind ATP. Asp702 serves as the catalytic Proton acceptor. The segment at 720–774 (DFDLSFMTTCTPQLIIPAAPSKRRRSKSQPLPTFVAEPSTQSNSFVGTEEYIAPE) is activation loop.

The protein belongs to the protein kinase superfamily. AGC Ser/Thr protein kinase family. In terms of assembly, homodimer. Interacts with PKS1, PKS2, RPT3 and PHOT1. Associates with CBC1 and CBC2. Binds to BHP. FMN serves as cofactor. In terms of processing, autophosphorylated in response to blue light irradiation. Post-translationally, 2 molecules of FMN bind covalently to cysteines after exposure to blue light and are reversed in the dark. In terms of tissue distribution, expressed in leaves, stems and flowers, and to a lower extent in roots. Present in guard cells (at protein level).

Its subcellular location is the cell membrane. It carries out the reaction L-seryl-[protein] + ATP = O-phospho-L-seryl-[protein] + ADP + H(+). The enzyme catalyses L-threonyl-[protein] + ATP = O-phospho-L-threonyl-[protein] + ADP + H(+). Autophosphorylation is inhibited by staurosporine, but not by tyrphostin 9, sphingosine, GW5074 and BML-265. Functionally, protein kinase that acts as a blue light photoreceptor in a signal-transduction pathway for photo-induced movements. Triggers the phosphorylation of AHA1 and AHA2 C-terminal penultimate Thr in guard cells to activate them and induce stomatal opening in response to blue light (BL). Also phosphorylates BLUS1, a kinase involved in stomatal opening. Mediates calcium spiking of extra- and intracellular origins in response to blue light. Involved in hypocotyl phototropism. Contributes to the chloroplast accumulation in low blue light and mediates their translocation (avoidance response) at high fluence. Regulates stomata opening and photomorphogenesis response of leaf tissue. Not involved in hypocotyl elongation inhibition, anthocyanin accumulation or cotyledon opening. In Arabidopsis thaliana (Mouse-ear cress), this protein is Phototropin-2.